A 408-amino-acid polypeptide reads, in one-letter code: GTPase Obg (408 aa).

The 159-residue stretch at 1–159 (MKFFDEARIE…RNLHLELKVL (159 aa)) folds into the Obg domain. Residues 160 to 334 (ADVGLLGMPN…LIFALQDFLD (175 aa)) form the OBG-type G domain. GTP contacts are provided by residues 166–173 (GMPNAGKS), 191–195 (FTTLQ), 213–216 (DIPG), 284–287 (NKLD), and 315–317 (SAL). Mg(2+) is bound by residues serine 173 and threonine 193. The disordered stretch occupies residues 385 to 408 (AEDALAEDALDDDADGEDADPNAR).

The protein belongs to the TRAFAC class OBG-HflX-like GTPase superfamily. OBG GTPase family. As to quaternary structure, monomer. It depends on Mg(2+) as a cofactor.

It localises to the cytoplasm. Functionally, an essential GTPase which binds GTP, GDP and possibly (p)ppGpp with moderate affinity, with high nucleotide exchange rates and a fairly low GTP hydrolysis rate. Plays a role in control of the cell cycle, stress response, ribosome biogenesis and in those bacteria that undergo differentiation, in morphogenesis control. The sequence is that of GTPase Obg from Azoarcus sp. (strain BH72).